The primary structure comprises 248 residues: PF03932 family protein CutC (248 aa).

The protein belongs to the CutC family. As to quaternary structure, homodimer.

Its subcellular location is the cytoplasm. The chain is PF03932 family protein CutC from Escherichia coli O45:K1 (strain S88 / ExPEC).